We begin with the raw amino-acid sequence, 451 residues long: Tubulin alpha-1 chain (451 aa).

Q11 contributes to the GTP binding site. K40 carries the post-translational modification N6-acetyllysine. E71, G144, T145, T179, N206, and N228 together coordinate GTP. E71 provides a ligand contact to Mg(2+). E254 is an active-site residue.

It belongs to the tubulin family. As to quaternary structure, dimer of alpha and beta chains. A typical microtubule is a hollow water-filled tube with an outer diameter of 25 nm and an inner diameter of 15 nM. Alpha-beta heterodimers associate head-to-tail to form protofilaments running lengthwise along the microtubule wall with the beta-tubulin subunit facing the microtubule plus end conferring a structural polarity. Microtubules usually have 13 protofilaments but different protofilament numbers can be found in some organisms and specialized cells. Mg(2+) is required as a cofactor. In terms of processing, undergoes a tyrosination/detyrosination cycle, the cyclic removal and re-addition of a C-terminal tyrosine residue by the enzymes tubulin tyrosine carboxypeptidase (TTCP) and tubulin tyrosine ligase (TTL), respectively. Acetylation of alpha chains at Lys-40 stabilizes microtubules and affects affinity and processivity of microtubule motors. This modification has a role in multiple cellular functions, ranging from cell motility, cell cycle progression or cell differentiation to intracellular trafficking and signaling.

The protein resides in the cytoplasm. It localises to the cytoskeleton. The enzyme catalyses GTP + H2O = GDP + phosphate + H(+). Its function is as follows. Tubulin is the major constituent of microtubules, a cylinder consisting of laterally associated linear protofilaments composed of alpha- and beta-tubulin heterodimers. Microtubules grow by the addition of GTP-tubulin dimers to the microtubule end, where a stabilizing cap forms. Below the cap, tubulin dimers are in GDP-bound state, owing to GTPase activity of alpha-tubulin. In Eleusine indica (Goosegrass), this protein is Tubulin alpha-1 chain (TUBA1).